Consider the following 453-residue polypeptide: Bifunctional protein GlmU (453 aa).

Positions 1–227 (MAVSVIILAA…SIEVMGVNDR (227 aa)) are pyrophosphorylase. UDP-N-acetyl-alpha-D-glucosamine-binding positions include 8 to 11 (LAAG), Lys-22, Gln-73, 78 to 79 (GT), 100 to 102 (SGD), Gly-137, Glu-152, Asn-167, and Asn-225. Position 102 (Asp-102) interacts with Mg(2+). Position 225 (Asn-225) interacts with Mg(2+). Residues 228–248 (QQLAYLERFYQKREAARLMGE) are linker. An N-acetyltransferase region spans residues 249–453 (GVSLSDPDRF…WPGWKRPSKK (205 aa)). Positions 331 and 349 each coordinate UDP-N-acetyl-alpha-D-glucosamine. The active-site Proton acceptor is the His-361. Tyr-364 and Asn-375 together coordinate UDP-N-acetyl-alpha-D-glucosamine. Acetyl-CoA-binding positions include Ala-378, 384–385 (NY), Ser-403, Ala-421, and Arg-438. Residues 430–453 (PPGELTLSRTPQKSWPGWKRPSKK) form a disordered region.

In the N-terminal section; belongs to the N-acetylglucosamine-1-phosphate uridyltransferase family. This sequence in the C-terminal section; belongs to the transferase hexapeptide repeat family. In terms of assembly, homotrimer. Mg(2+) is required as a cofactor.

It is found in the cytoplasm. It carries out the reaction alpha-D-glucosamine 1-phosphate + acetyl-CoA = N-acetyl-alpha-D-glucosamine 1-phosphate + CoA + H(+). The catalysed reaction is N-acetyl-alpha-D-glucosamine 1-phosphate + UTP + H(+) = UDP-N-acetyl-alpha-D-glucosamine + diphosphate. It participates in nucleotide-sugar biosynthesis; UDP-N-acetyl-alpha-D-glucosamine biosynthesis; N-acetyl-alpha-D-glucosamine 1-phosphate from alpha-D-glucosamine 6-phosphate (route II): step 2/2. The protein operates within nucleotide-sugar biosynthesis; UDP-N-acetyl-alpha-D-glucosamine biosynthesis; UDP-N-acetyl-alpha-D-glucosamine from N-acetyl-alpha-D-glucosamine 1-phosphate: step 1/1. It functions in the pathway bacterial outer membrane biogenesis; LPS lipid A biosynthesis. Catalyzes the last two sequential reactions in the de novo biosynthetic pathway for UDP-N-acetylglucosamine (UDP-GlcNAc). The C-terminal domain catalyzes the transfer of acetyl group from acetyl coenzyme A to glucosamine-1-phosphate (GlcN-1-P) to produce N-acetylglucosamine-1-phosphate (GlcNAc-1-P), which is converted into UDP-GlcNAc by the transfer of uridine 5-monophosphate (from uridine 5-triphosphate), a reaction catalyzed by the N-terminal domain. The protein is Bifunctional protein GlmU of Nitrosococcus oceani (strain ATCC 19707 / BCRC 17464 / JCM 30415 / NCIMB 11848 / C-107).